Consider the following 45-residue polypeptide: DQGTACTGEHAHNFCLNGGTCRHIQSLGEYYCICPEGYTGHRCEK.

The 43-residue stretch at 2–44 (QGTACTGEHAHNFCLNGGTCRHIQSLGEYYCICPEGYTGHRCE) folds into the EGF-like domain. 3 cysteine pairs are disulfide-bonded: Cys6-Cys21, Cys15-Cys32, and Cys34-Cys43.

It localises to the secreted. The protein localises to the nematocyst. Has both toxic and EGF activity. In Bunodosoma caissarum (Sea anemone), this protein is Toxin Bcs III 15.09.